A 557-amino-acid polypeptide reads, in one-letter code: Copine-6 (557 aa).

2 C2 domains span residues 2–127 (SDPE…TKPL) and 134–263 (TAGK…MQWD). Ca(2+) is bound by residues aspartate 167, aspartate 173, aspartate 229, aspartate 231, and aspartate 237. Positions 244–303 (STFQEMQEGTANPGQEMQWDCINPKYRDKKKNYKSSGTVVLAQCTVEKVHTFLDYIMGGC) are linker region. A VWFA domain is found at 306 to 526 (SFTVAIDFTA…ALAKRVLAEV (221 aa)).

This sequence belongs to the copine family. In terms of assembly, interacts (via second C2 domain) with OS9 (via C-terminus); this interaction occurs in a calcium-dependent manner in vitro. May interact with NECAB1. Ca(2+) serves as cofactor.

Its subcellular location is the cytoplasm. The protein resides in the cell membrane. The protein localises to the endosome. It localises to the cytoplasmic vesicle. It is found in the clathrin-coated vesicle. Its subcellular location is the perikaryon. The protein resides in the cell projection. The protein localises to the dendrite. Functionally, calcium-dependent phospholipid-binding protein that plays a role in calcium-mediated intracellular processes. Binds phospholipid membranes in a calcium-dependent manner. Plays a role in dendrite formation by melanocytes. This chain is Copine-6, found in Pongo abelii (Sumatran orangutan).